Here is a 698-residue protein sequence, read N- to C-terminus: Putative transposon gamma-delta 80.3 kDa protein (698 aa).

This Escherichia coli (strain K12) protein is Putative transposon gamma-delta 80.3 kDa protein (tnpX).